The sequence spans 149 residues: Transcription factor HY5-like (149 aa).

The tract at residues 1–77 (MSLQRPNGNS…RRRGRNPVDK (77 aa)) is disordered. Residues 23–36 (ESDEELLMVPDMEA) form an interaction with COP1 region. Phosphoserine is present on Ser-24. Polar residues predominate over residues 55-64 (ELDQTQNGVS). The 64-residue stretch at 78–141 (EYRSLKRLLR…TMLRKMLINT (64 aa)) folds into the bZIP domain. The segment at 80–100 (RSLKRLLRNRVSAQQARERKK) is basic motif. The tract at residues 106-134 (LESRANELQNNNDQLEEKISTLTNENTML) is leucine-zipper.

It belongs to the bZIP family. As to quaternary structure, heterodimer; heterodimerizes with HY5 via the leucine-zipper domains. Interacts with COP1 WD40 domain. Interacts with BBX24/STO and BBX25/STH. Post-translationally, ubiquitinated by COP1. Ubiquitination takes place in darkness and leads to its subsequent degradation, thereby preventing the activation of photomorphogenesis signals.

It is found in the nucleus. Its function is as follows. Transcription factor that promotes photomorphogenesis in light. Acts downstream of the light receptor network and directly affects transcription of light-induced genes. Specifically involved in the blue light specific pathway, suggesting that it participates in transmission of cryptochromes (CRY1 and CRY2) signals to downstream responses. In darkness, its degradation prevents the activation of light-induced genes. This chain is Transcription factor HY5-like (HYH), found in Arabidopsis thaliana (Mouse-ear cress).